A 335-amino-acid polypeptide reads, in one-letter code: MNQWMELADRVLAGAEVTDEEALSILHCPDEDILLLMHGAFHIRKHFYGKKVKLNMIMNAKSGLCPENCGYCSQSAISKAPIESYRMVNKETLLEGAKRAHDLNIGTYCIVASGRGPSNREVDQVVDAVQEIKETYGLKICACLGLLKPEQAKRLKDAGVDRYNHNLNTSQRNHSNITTSHTYDDRVNTVEIAKESGLSPCSGAIIGMKETKQDVIDIAKSLKALDADSIPVNFLHAIDGTPLEGVNELNPLYCLKVLALFRFINPSKEIRISGGREVNLRTLQPLGLYAANSIFVGDYLTTAGQEETEDHKMLSDLGFEVESVEEMKASLSAKS.

Positions 47 to 276 (FYGKKVKLNM…SKEIRISGGR (230 aa)) constitute a Radical SAM core domain. Positions 65, 69, and 72 each coordinate [4Fe-4S] cluster. Residues cysteine 109, cysteine 141, cysteine 201, and arginine 271 each contribute to the [2Fe-2S] cluster site.

The protein belongs to the radical SAM superfamily. Biotin synthase family. In terms of assembly, homodimer. It depends on [4Fe-4S] cluster as a cofactor. The cofactor is [2Fe-2S] cluster.

It carries out the reaction (4R,5S)-dethiobiotin + (sulfur carrier)-SH + 2 reduced [2Fe-2S]-[ferredoxin] + 2 S-adenosyl-L-methionine = (sulfur carrier)-H + biotin + 2 5'-deoxyadenosine + 2 L-methionine + 2 oxidized [2Fe-2S]-[ferredoxin]. It functions in the pathway cofactor biosynthesis; biotin biosynthesis; biotin from 7,8-diaminononanoate: step 2/2. Its function is as follows. Catalyzes the conversion of dethiobiotin (DTB) to biotin by the insertion of a sulfur atom into dethiobiotin via a radical-based mechanism. This chain is Biotin synthase, found in Bacillus subtilis (strain 168).